A 483-amino-acid polypeptide reads, in one-letter code: Glycogen synthase (483 aa).

Lys15 is an ADP-alpha-D-glucose binding site.

This sequence belongs to the glycosyltransferase 1 family. Bacterial/plant glycogen synthase subfamily.

The catalysed reaction is [(1-&gt;4)-alpha-D-glucosyl](n) + ADP-alpha-D-glucose = [(1-&gt;4)-alpha-D-glucosyl](n+1) + ADP + H(+). Its pathway is glycan biosynthesis; glycogen biosynthesis. Synthesizes alpha-1,4-glucan chains using ADP-glucose. The protein is Glycogen synthase of Petrotoga mobilis (strain DSM 10674 / SJ95).